A 1082-amino-acid chain; its full sequence is Mediator of RNA polymerase II transcription subunit 14 (1082 aa).

Disordered regions lie at residues 1–80 (MTTT…APPP) and 319–343 (EATSTNGDSENNEENSSSNGNNLPL). An N-acetylthreonine modification is found at Thr2. Ser7 bears the Phosphoserine mark. Over residues 13–28 (NEERLSNEMHALKNRS) the composition is skewed to basic and acidic residues. The segment covering 29–59 (EQNGQEQQGPVKNTQLHGPSATDPETTATQK) has biased composition (polar residues). A compositionally biased stretch (low complexity) spans 321 to 340 (TSTNGDSENNEENSSSNGNN). Thr1036 is modified (phosphothreonine).

This sequence belongs to the Mediator complex subunit 14 family. As to quaternary structure, component of the Mediator complex, which is composed of at least 21 subunits that form three structurally distinct submodules. The Mediator head module contains MED6, MED8, MED11, SRB4/MED17, SRB5/MED18, ROX3/MED19, SRB2/MED20 and SRB6/MED22, the middle module contains MED1, MED4, NUT1/MED5, MED7, CSE2/MED9, NUT2/MED10, SRB7/MED21 and SOH1/MED31, and the tail module contains MED2, PGD1/MED3, RGR1/MED14, GAL11/MED15 and SIN4/MED16. The head and the middle modules interact directly with RNA polymerase II, whereas the elongated tail module interacts with gene-specific regulatory proteins.

The protein resides in the nucleus. In terms of biological role, component of the Mediator complex, a coactivator involved in the regulated transcription of nearly all RNA polymerase II-dependent genes. Mediator functions as a bridge to convey information from gene-specific regulatory proteins to the basal RNA polymerase II transcription machinery. The Mediator complex, having a compact conformation in its free form, is recruited to promoters by direct interactions with regulatory proteins and serves for the assembly of a functional preinitiation complex with RNA polymerase II and the general transcription factors. The Mediator complex unfolds to an extended conformation and partially surrounds RNA polymerase II, specifically interacting with the unphosphorylated form of the C-terminal domain (CTD) of RNA polymerase II. The Mediator complex dissociates from the RNA polymerase II holoenzyme and stays at the promoter when transcriptional elongation begins. The chain is Mediator of RNA polymerase II transcription subunit 14 (RGR1) from Saccharomyces cerevisiae (strain ATCC 204508 / S288c) (Baker's yeast).